The following is a 684-amino-acid chain: Calpain-14 (684 aa).

Residues 43 to 336 (LFEDTSFPAT…FVLLVICKLT (294 aa)) enclose the Calpain catalytic domain. Active-site residues include C101, H254, and N278. A domain III region spans residues 337 to 503 (PGLLSQEAAQ…KHIFYEIGSN (167 aa)). A linker region spans residues 504–517 (SGVVFSKEIEDQNE). Residues 518–683 (RQDEFFTKFF…KPEWMMMALY (166 aa)) are domain IV. EF-hand domains follow at residues 557-592 (FSLEACQGILALLDLNASGTMSIQEFRDLWKQLKLS), 586-621 (WKQLKLSQKVFHKQDRGSGYLNWEQLHAAMREAGIM), and 651-684 (LRVENMEDVFQNLTQDGKGIYLQKPEWMMMALYS). The Ca(2+) site is built by D570, N572, S574, T576, and E581.

The protein belongs to the peptidase C2 family. As to expression, not expressed in tissues tested.

Its function is as follows. Calcium-regulated non-lysosomal thiol-protease. The sequence is that of Calpain-14 (CAPN14) from Homo sapiens (Human).